Here is a 674-residue protein sequence, read N- to C-terminus: Metal-nicotianamine transporter YSL2 (674 aa).

The segment at 1–29 (MEAAAPEIERCDAGDVESDHDGAAAAAER) is disordered. The segment covering 7-22 (EIERCDAGDVESDHDG) has biased composition (basic and acidic residues). Transmembrane regions (helical) follow at residues 41-61 (GMVAALLIGFVYTVIIMKLAL), 64-84 (GIIPTLNVSAALLAFLALRGW), 118-138 (CAVACYTMGFGGGFGSSLLAL), 162-182 (GVGWMTGFLFAISFVGLLNLL), 224-244 (GFLNCFGISLLWSFFQWFYTG), 283-303 (LVNLSALFGAILSWGIMWPLI), 329-349 (FMCVALIMGDGLYHFIKVTGI), 392-412 (LAYAGYALLSIVAVIAIPIMF), 420-440 (VVVAFVLAPVLGFSNAYGTGL), 452-472 (IALFIFAAWGGRDNGVIAGLV), 506-526 (VGQAIGTAMGCIIAPLTFLLF), 559-579 (SALPKHCLELSAGFFAFSVLI), 604-624 (FLVGANFAIDMCVGSLIVFAW), and 633-653 (ALLVPAVASGFICGDGIWMFP).

The protein belongs to the YSL (TC 2.A.67.2) family. As to expression, expressed in phloem cells of vascular bundles in leaves and leaf sheaths. Expressed at low levels in phloem companion cells in the central cylinder of roots, but not in the epidermal or cortical cells.

It is found in the cell membrane. Involved in the phloem transport of iron and manganese and their translocation into the grain. Transports iron- and manganese-nicotianamine chelates, but not iron-phytosiderophore. In Oryza sativa subsp. japonica (Rice), this protein is Metal-nicotianamine transporter YSL2 (YSL2).